The chain runs to 118 residues: Protein MT2260 (118 aa).

Belongs to the HesB/IscA family.

This Mycobacterium tuberculosis (strain CDC 1551 / Oshkosh) protein is Protein MT2260.